Consider the following 392-residue polypeptide: Anhydro-N-acetylmuramic acid kinase (392 aa).

22–29 (GTSMDGVD) contacts ATP.

The protein belongs to the anhydro-N-acetylmuramic acid kinase family.

It carries out the reaction 1,6-anhydro-N-acetyl-beta-muramate + ATP + H2O = N-acetyl-D-muramate 6-phosphate + ADP + H(+). The protein operates within amino-sugar metabolism; 1,6-anhydro-N-acetylmuramate degradation. It participates in cell wall biogenesis; peptidoglycan recycling. In terms of biological role, catalyzes the specific phosphorylation of 1,6-anhydro-N-acetylmuramic acid (anhMurNAc) with the simultaneous cleavage of the 1,6-anhydro ring, generating MurNAc-6-P. Is required for the utilization of anhMurNAc either imported from the medium or derived from its own cell wall murein, and thus plays a role in cell wall recycling. The chain is Anhydro-N-acetylmuramic acid kinase from Burkholderia pseudomallei (strain 1106a).